The sequence spans 1247 residues: MAKYNNNNYANKATNLKQQVVLPTYTLDSNLVLLPGIMYNVTFSRFKAAALLYRYKNFISQVSIINNLLSEYDFNSGNSNEEERSETEQKIEQSSLGQPETYHEINPSVISTEAVEGIKEFFQYETNMKTGRGGKGEKEAKSTNDGIKEFDWLTLAIIPNLDKIKDPETNYSIGDAAKLTNVVTVARIIGIVDDSTNIKLTLQAITRGVQITDDSKMNQHKNGLKTNEQVIGIDWNHNVSDLKGKFNALQKNYQQLFQSIDKFLIDYREALDYNKNNSNNKNGNLSLIKGNATINNNKNSDDKSNQDIKSQNLLTLNPLANALYMQLVGSKDFNKAFHRLEKLFSQVSKNDEYKIDNETYLRLVDLTCGILPFPNFQKLALLNKYKLDDRSVLINEMILQLIQIFENLQTNNSFVNNWFHSEATNIQKANVVANQLKSIRNLLEGMTKNRPIKSNKRNPGPASSSGPSFSNGKSSPGRANARPKSNHQDGFNGNDGDYNDVDDDDDGDEDLKAIFNFIKHKLPTISTLSADSKRLILKDFKRVKASANSPGGGGNSDFHVLRNYLEIVMDIPWDNYVTKFKSNKDIDLKLAKKQLDDDHYGLEHVKKRLIQYLVVLKLLGINAEKDQSDKSQPIKDNSKDSPNSSSKALTKSPTSSLSRKTISSIVIANKDETYLAKQQAKTTNQKSITEAKTNPSTTMITSNESIHVSKNNKSPIIMLAGPPGTGKTSLAKSIASALGRNFQRISLGGIKDESEIRGHRRTYVGAMPGLLIQALRKSRCMNPVILLDEIDKVIGGNNSGGVNKFNGDPSAALLEVLDPEQNNTFIDHYLGFPIDLSQVIFICTANDPWNMTRPLLDRLETIEIGAYDYNEKLIIGKKYLLPRQIKRNGFPVVDTKKMTTVVAGSSNQDEFIRINDATMKKVILDYTRGEAGVRNFERRLGTLCRFKAVEYCEWLNKDIKNYNPIIDENDLPIYLGVPYSSGDVTTEGTVGVGVVHGLSYNSDGSGSVLVFESIGFDRRISNKEHNGGNGATLNMTGRLGEVLMESGKIGLVFIKSMIYKNILKFDNNNNNKHLLLDKYNNLDIHMHVPMGSVSKDGPSAGVTMALSFLSVLLDKPVPSDIAMTGEITLRGIILPIGGVKEKLMGAHLNSNIKRMIVPRENRKDLIKEYSRSIEEAGEVLDHHLINDLIKDNEDKEFKLTQVEEYYQNKYGISLFYAKEFYDIIKIVWNEDEVLLKQDNSRLLEYHI.

A Lon N-terminal domain is found at 22–402 (LPTYTLDSNL…LINEMILQLI (381 aa)). Disordered regions lie at residues 76–103 (SGNS…ETYH), 447–503 (TKNR…DVDD), and 626–655 (DQSD…SPTS). Over residues 459–477 (PGPASSSGPSFSNGKSSPG) the composition is skewed to low complexity. The span at 626 to 639 (DQSDKSQPIKDNSK) shows a compositional bias: basic and acidic residues. An ATP-binding site is contributed by 721–728 (GPPGTGKT). Positions 989 to 1230 (TVGVGVVHGL…YDIIKIVWNE (242 aa)) constitute a Lon proteolytic domain. Active-site residues include Ser1099 and Lys1142.

This sequence belongs to the peptidase S16 family.

It is found in the peroxisome matrix. The catalysed reaction is Hydrolysis of proteins in presence of ATP.. In terms of biological role, ATP-dependent serine protease that mediates the selective degradation of misfolded and unassembled polypeptides in the peroxisomal matrix. Necessary for type 2 peroxisome targeting signal (PTS2)-containing protein processing and facilitates peroxisome matrix protein import. The protein is Lon protease homolog 2, peroxisomal of Candida dubliniensis (strain CD36 / ATCC MYA-646 / CBS 7987 / NCPF 3949 / NRRL Y-17841) (Yeast).